The primary structure comprises 465 residues: Tetratricopeptide repeat protein 38 (465 aa).

TPR repeat units lie at residues 104 to 137, 176 to 209, and 248 to 281; these read REQL…HPTD, SYVK…EPTD, and CHNY…SLQA.

This sequence belongs to the TTC38 family.

This Mus musculus (Mouse) protein is Tetratricopeptide repeat protein 38 (Ttc38).